We begin with the raw amino-acid sequence, 89 residues long: Probable Fe(2+)-trafficking protein (89 aa).

The protein belongs to the Fe(2+)-trafficking protein family.

Could be a mediator in iron transactions between iron acquisition and iron-requiring processes, such as synthesis and/or repair of Fe-S clusters in biosynthetic enzymes. The polypeptide is Probable Fe(2+)-trafficking protein (Acinetobacter baumannii (strain SDF)).